Consider the following 88-residue polypeptide: Small ribosomal subunit protein uS17 (88 aa).

It belongs to the universal ribosomal protein uS17 family. As to quaternary structure, part of the 30S ribosomal subunit.

Its function is as follows. One of the primary rRNA binding proteins, it binds specifically to the 5'-end of 16S ribosomal RNA. The chain is Small ribosomal subunit protein uS17 from Xylella fastidiosa (strain M23).